The primary structure comprises 386 residues: Succinate--CoA ligase [ADP-forming] subunit beta (386 aa).

The 236-residue stretch at 9–244 (KALLRAAGIK…TTQEDHRETQ (236 aa)) folds into the ATP-grasp domain. ATP-binding positions include Lys-46, 53–55 (GRG), Glu-100, and Arg-103. 2 residues coordinate Mg(2+): Asn-199 and Asp-213. Residues Asn-264 and 321–323 (GIV) each bind substrate.

Belongs to the succinate/malate CoA ligase beta subunit family. As to quaternary structure, heterotetramer of two alpha and two beta subunits. Mg(2+) is required as a cofactor.

The catalysed reaction is succinate + ATP + CoA = succinyl-CoA + ADP + phosphate. It carries out the reaction GTP + succinate + CoA = succinyl-CoA + GDP + phosphate. The protein operates within carbohydrate metabolism; tricarboxylic acid cycle; succinate from succinyl-CoA (ligase route): step 1/1. Succinyl-CoA synthetase functions in the citric acid cycle (TCA), coupling the hydrolysis of succinyl-CoA to the synthesis of either ATP or GTP and thus represents the only step of substrate-level phosphorylation in the TCA. The beta subunit provides nucleotide specificity of the enzyme and binds the substrate succinate, while the binding sites for coenzyme A and phosphate are found in the alpha subunit. The sequence is that of Succinate--CoA ligase [ADP-forming] subunit beta from Dichelobacter nodosus (strain VCS1703A).